A 354-amino-acid chain; its full sequence is Methionine import ATP-binding protein MetN (354 aa).

Residues 8–250 (LDHIDITFRQ…PKEALTQEFI (243 aa)) enclose the ABC transporter domain. 42–49 (GYSGAGKS) contributes to the ATP binding site.

Belongs to the ABC transporter superfamily. Methionine importer (TC 3.A.1.24) family. As to quaternary structure, the complex is composed of two ATP-binding proteins (MetN), two transmembrane proteins (MetI) and a solute-binding protein (MetQ).

It localises to the cell membrane. The enzyme catalyses L-methionine(out) + ATP + H2O = L-methionine(in) + ADP + phosphate + H(+). It catalyses the reaction D-methionine(out) + ATP + H2O = D-methionine(in) + ADP + phosphate + H(+). In terms of biological role, part of the ABC transporter complex MetNIQ involved in methionine import. Responsible for energy coupling to the transport system. This is Methionine import ATP-binding protein MetN from Streptococcus pyogenes serotype M3 (strain ATCC BAA-595 / MGAS315).